The chain runs to 399 residues: S-adenosylmethionine synthase (399 aa).

Residue His-17 participates in ATP binding. Asp-19 provides a ligand contact to Mg(2+). Residue Glu-45 coordinates K(+). L-methionine is bound by residues Glu-58 and Gln-101. The segment at 101–111 (QSPDIAQGVDE) is flexible loop. Residues 177–179 (DAK), 244–245 (RF), Asp-253, 259–260 (RK), Ala-276, and Lys-280 each bind ATP. Asp-253 is an L-methionine binding site. Lys-284 contacts L-methionine.

The protein belongs to the AdoMet synthase family. Homotetramer; dimer of dimers. Requires Mg(2+) as cofactor. It depends on K(+) as a cofactor.

It is found in the cytoplasm. The catalysed reaction is L-methionine + ATP + H2O = S-adenosyl-L-methionine + phosphate + diphosphate. Its pathway is amino-acid biosynthesis; S-adenosyl-L-methionine biosynthesis; S-adenosyl-L-methionine from L-methionine: step 1/1. Its function is as follows. Catalyzes the formation of S-adenosylmethionine (AdoMet) from methionine and ATP. The overall synthetic reaction is composed of two sequential steps, AdoMet formation and the subsequent tripolyphosphate hydrolysis which occurs prior to release of AdoMet from the enzyme. The polypeptide is S-adenosylmethionine synthase (Listeria monocytogenes serotype 4b (strain CLIP80459)).